A 578-amino-acid chain; its full sequence is Vacuolar protein 8 (578 aa).

9 ARM repeats span residues 58-95, 96-135, 137-176, 178-217, 219-258, 262-301, 303-342, 344-384, and 428-467; these read NRAETDFFSGEPLRALSTLVYSDNVDLQRSASLTFAEI, TERDVREVDRDTLEPILFLLQSSDIEVQRAASAALGNLAV, AENKVLIVALGGLTPLIRQMMSPNVEVQCNAVGCITNLAT, EDNKAKIARSGALGPLIRLAKSKDMRVQRNATGALLNMTH, DDNRQQLVNAGAIPVLVQLLSSPDVDVQYYCTTALSNIAV, NRKRLAQTESRLVQSLVHLMDSSTPKVQCQAALALRNLAS, EKYQLEIVRAKGLPPLLRLLQSSYLPLILSAVACIRNISI, PLNE…NLAA, and DELKPHLLNLGVFDVLIPLTNSESIEVQGNSAAALGNLSS.

Belongs to the beta-catenin family.

It is found in the vacuole membrane. Functionally, functions in both vacuole inheritance and protein targeting from the cytoplasm to vacuole. The protein is Vacuolar protein 8 (vac8) of Aspergillus fumigatus (strain ATCC MYA-4609 / CBS 101355 / FGSC A1100 / Af293) (Neosartorya fumigata).